Consider the following 305-residue polypeptide: Acyl transferase (305 aa).

Residues S114, D211, and H241 each act as charge relay system in the active site.

This sequence belongs to the LuxD family.

The protein operates within lipid metabolism; fatty acid reduction for biolumincescence. Functionally, acyl transferase is part of the fatty acid reductase system required for aldehyde biosynthesis; it produces fatty acids for the luminescent reaction. In Vibrio campbellii (strain ATCC BAA-1116), this protein is Acyl transferase.